Here is a 224-residue protein sequence, read N- to C-terminus: UPF0758 protein PFL_6051 (224 aa).

One can recognise an MPN domain in the interval 102 to 224 (ALENPLVVRD…PLSMAEYGWI (123 aa)). His-173, His-175, and Asp-186 together coordinate Zn(2+). The JAMM motif signature appears at 173–186 (HNHPSGICEPSPAD).

It belongs to the UPF0758 family.

This chain is UPF0758 protein PFL_6051, found in Pseudomonas fluorescens (strain ATCC BAA-477 / NRRL B-23932 / Pf-5).